A 376-amino-acid polypeptide reads, in one-letter code: MEGGAAGGQRDRETLDAVRSVVFKPSVSLEEKRFPRVQGYDFNRGCDLIGLLDSISSTGFQASNLGDAIDVINQMIDWRLSHDAPTEDCSEEERNLAYRQSVTCKIFLGFTSNLVSSGIREIIRFLVQHRMVEVLVTTAGGIEEDLIKCLAPTYKGDFSLPGSYLRSKGLNRIGNLLVPNDNYCKFEDWIMPILDQMLLEQTTENVVWTPSKVIARLGKEINDESSYLYWAYKNNVSVYCPALTDGSLGDMLYCHSVRNPGLLIDIVQDIRAMNGEAVHVGLRKTGVIILGGGLPKHHICNANMFRNGADYAVYVNTAQEFDGSDSGAEPDEAISWGKIKGSAKTIKVHCDATIAFPLLVAATFARKFQERNNKLA.

Residues 112–116, 138–140, glutamate 144, and aspartate 245 each bind NAD(+); these read SNLVS and TAG. 143–144 lines the spermidine pocket; it reads EE. Aspartate 250 is a binding site for spermidine. Glycine 292 contributes to the NAD(+) binding site. Histidine 297 lines the spermidine pocket. 317–318 is an NAD(+) binding site; the sequence is TA. Spermidine-binding positions include 323 to 325 and 332 to 338; these read GSD and EAISWGK. Lysine 338 acts as the Nucleophile in catalysis. 351–352 contacts NAD(+); the sequence is DA.

It belongs to the deoxyhypusine synthase family. NAD(+) is required as a cofactor.

It carries out the reaction [eIF5A protein]-L-lysine + spermidine = [eIF5A protein]-deoxyhypusine + propane-1,3-diamine. The protein operates within protein modification; eIF5A hypusination. Its function is as follows. Catalyzes the NAD-dependent oxidative cleavage of spermidine and the subsequent transfer of the butylamine moiety of spermidine to the epsilon-amino group of a specific lysine residue of the eIF-5A precursor protein to form the intermediate deoxyhypusine residue. Also able to produce homospermidine from putrescine. The polypeptide is Deoxyhypusine synthase (DHS) (Musa acuminata (Banana)).